A 457-amino-acid polypeptide reads, in one-letter code: ATP synthase subunit beta (457 aa).

Position 147 to 154 (glycine 147 to threonine 154) interacts with ATP.

This sequence belongs to the ATPase alpha/beta chains family. In terms of assembly, F-type ATPases have 2 components, CF(1) - the catalytic core - and CF(0) - the membrane proton channel. CF(1) has five subunits: alpha(3), beta(3), gamma(1), delta(1), epsilon(1). CF(0) has three main subunits: a(1), b(2) and c(9-12). The alpha and beta chains form an alternating ring which encloses part of the gamma chain. CF(1) is attached to CF(0) by a central stalk formed by the gamma and epsilon chains, while a peripheral stalk is formed by the delta and b chains.

It is found in the cell inner membrane. The catalysed reaction is ATP + H2O + 4 H(+)(in) = ADP + phosphate + 5 H(+)(out). Functionally, produces ATP from ADP in the presence of a proton gradient across the membrane. The catalytic sites are hosted primarily by the beta subunits. This is ATP synthase subunit beta from Actinobacillus pleuropneumoniae serotype 3 (strain JL03).